Here is a 476-residue protein sequence, read N- to C-terminus: Aspartyl/glutamyl-tRNA(Asn/Gln) amidotransferase subunit B (476 aa).

The protein belongs to the GatB/GatE family. GatB subfamily. In terms of assembly, heterotrimer of A, B and C subunits.

It catalyses the reaction L-glutamyl-tRNA(Gln) + L-glutamine + ATP + H2O = L-glutaminyl-tRNA(Gln) + L-glutamate + ADP + phosphate + H(+). It carries out the reaction L-aspartyl-tRNA(Asn) + L-glutamine + ATP + H2O = L-asparaginyl-tRNA(Asn) + L-glutamate + ADP + phosphate + 2 H(+). Functionally, allows the formation of correctly charged Asn-tRNA(Asn) or Gln-tRNA(Gln) through the transamidation of misacylated Asp-tRNA(Asn) or Glu-tRNA(Gln) in organisms which lack either or both of asparaginyl-tRNA or glutaminyl-tRNA synthetases. The reaction takes place in the presence of glutamine and ATP through an activated phospho-Asp-tRNA(Asn) or phospho-Glu-tRNA(Gln). This Listeria innocua serovar 6a (strain ATCC BAA-680 / CLIP 11262) protein is Aspartyl/glutamyl-tRNA(Asn/Gln) amidotransferase subunit B.